A 158-amino-acid chain; its full sequence is Large ribosomal subunit protein uL22 (158 aa).

This sequence belongs to the universal ribosomal protein uL22 family. In terms of assembly, part of the 50S ribosomal subunit.

Its function is as follows. This protein binds specifically to 23S rRNA. It makes multiple contacts with different domains of the 23S rRNA in the assembled 50S subunit and ribosome. In terms of biological role, the globular domain of the protein is located near the polypeptide exit tunnel on the outside of the subunit, while an extended beta-hairpin is found that lines the wall of the exit tunnel in the center of the 70S ribosome. The chain is Large ribosomal subunit protein uL22 from Haloquadratum walsbyi (strain DSM 16790 / HBSQ001).